Reading from the N-terminus, the 232-residue chain is Ribonuclease 3 (232 aa).

One can recognise an RNase III domain in the interval 5 to 134 (KKALLEQFDL…FLGALLLDKG (130 aa)). Mg(2+) is bound at residue Glu-47. Residue Asp-51 is part of the active site. The Mg(2+) site is built by Asp-120 and Glu-123. Residue Glu-123 is part of the active site. The 70-residue stretch at 160–229 (DYKTKLQELL…AKNAFEKESS (70 aa)) folds into the DRBM domain. The segment at 203-232 (KSGQGQGRSKKLAEQEAAKNAFEKESSSCF) is disordered. The segment covering 213-232 (KLAEQEAAKNAFEKESSSCF) has biased composition (basic and acidic residues).

Belongs to the ribonuclease III family. In terms of assembly, homodimer. Requires Mg(2+) as cofactor.

Its subcellular location is the cytoplasm. The enzyme catalyses Endonucleolytic cleavage to 5'-phosphomonoester.. Functionally, digests double-stranded RNA. Involved in the processing of primary rRNA transcript to yield the immediate precursors to the large and small rRNAs (23S and 16S). Processes some mRNAs, and tRNAs when they are encoded in the rRNA operon. Processes pre-crRNA and tracrRNA of type II CRISPR loci if present in the organism. In Streptococcus sanguinis (strain SK36), this protein is Ribonuclease 3.